Here is a 505-residue protein sequence, read N- to C-terminus: Activin receptor type-1B (505 aa).

Positions 1 to 23 (MAESAGASSFFPLVVLLLAGSGG) are cleaved as a signal peptide. Residues 24–126 (SGPRGVQALL…EHPSMWGPVE (103 aa)) are Extracellular-facing. Asn43 is a glycosylation site (N-linked (GlcNAc...) asparagine). The chain crosses the membrane as a helical span at residues 127–149 (LVGIIAGPVFLLFLIIIIVFLVI). The Cytoplasmic portion of the chain corresponds to 150–505 (NYHQRVYHNR…QLSVQEDVKI (356 aa)). Residues 177–206 (KTLQDLVYDLSTSGSGSGLPLFVQRTVART) form the GS domain. Residues 207–497 (IVLQEIIGKG…LRIKKTLSQL (291 aa)) enclose the Protein kinase domain. Residues 213 to 221 (IGKGRFGEV) and Lys234 each bind ATP. The active-site Proton acceptor is the Asp335. Tyr380 is subject to Phosphotyrosine.

Belongs to the protein kinase superfamily. TKL Ser/Thr protein kinase family. TGFB receptor subfamily. Forms an activin receptor complex with activin receptor type-2 (ACVR2A or ACVR2B). Part of a complex consisting of MAGI2/ARIP1, ACVR2A, ACVR1B and SMAD3. Interacts with SMAD2 and SMAD3. Interacts with SMAD7. Interacts with FKBP1A. Interacts with IGSF1. Interacts with CRIPTO. Interacts with TDP2. Interacts with TSC22D1/TSC-22. Mg(2+) serves as cofactor. Requires Mn(2+) as cofactor. In terms of processing, autophosphorylated. Phosphorylated by activin receptor type-2 (ACVR2A or ACVR2B) in response to activin-binding at serine and threonine residues in the GS domain. Phosphorylation of ACVR1B by activin receptor type-2 regulates association with SMAD7. Ubiquitinated. Level of ubiquitination is regulated by the SMAD7-SMURF1 complex. Post-translationally, ubiquitinated. In terms of tissue distribution, expressed in many tissues, most strongly in kidney, pancreas, brain, lung, and liver.

The protein localises to the cell membrane. The catalysed reaction is L-threonyl-[receptor-protein] + ATP = O-phospho-L-threonyl-[receptor-protein] + ADP + H(+). The enzyme catalyses L-seryl-[receptor-protein] + ATP = O-phospho-L-seryl-[receptor-protein] + ADP + H(+). With respect to regulation, activin receptor type-2 (ACVR2A or ACVR2B) activates the type-1 receptor through phosphorylation of its regulatory GS domain. Its function is as follows. Transmembrane serine/threonine kinase activin type-1 receptor forming an activin receptor complex with activin receptor type-2 (ACVR2A or ACVR2B). Transduces the activin signal from the cell surface to the cytoplasm and is thus regulating a many physiological and pathological processes including neuronal differentiation and neuronal survival, hair follicle development and cycling, FSH production by the pituitary gland, wound healing, extracellular matrix production, immunosuppression and carcinogenesis. Activin is also thought to have a paracrine or autocrine role in follicular development in the ovary. Within the receptor complex, type-2 receptors (ACVR2A and/or ACVR2B) act as a primary activin receptors whereas the type-1 receptors like ACVR1B act as downstream transducers of activin signals. Activin binds to type-2 receptor at the plasma membrane and activates its serine-threonine kinase. The activated receptor type-2 then phosphorylates and activates the type-1 receptor such as ACVR1B. Once activated, the type-1 receptor binds and phosphorylates the SMAD proteins SMAD2 and SMAD3, on serine residues of the C-terminal tail. Soon after their association with the activin receptor and subsequent phosphorylation, SMAD2 and SMAD3 are released into the cytoplasm where they interact with the common partner SMAD4. This SMAD complex translocates into the nucleus where it mediates activin-induced transcription. Inhibitory SMAD7, which is recruited to ACVR1B through FKBP1A, can prevent the association of SMAD2 and SMAD3 with the activin receptor complex, thereby blocking the activin signal. Activin signal transduction is also antagonized by the binding to the receptor of inhibin-B via the IGSF1 inhibin coreceptor. ACVR1B also phosphorylates TDP2. This is Activin receptor type-1B (ACVR1B) from Homo sapiens (Human).